Here is a 205-residue protein sequence, read N- to C-terminus: UPF0316 protein Cthe_2213 (205 aa).

3 helical membrane-spanning segments follow: residues 15–37 (LPLLIFFSRIIDVTIGTIRIIFV), 44–64 (LAPVLGFFEVLVWIMAISQIM), and 70–90 (FVCYFAYAAGFATGTFVGIII).

This sequence belongs to the UPF0316 family.

The protein localises to the cell membrane. This Acetivibrio thermocellus (strain ATCC 27405 / DSM 1237 / JCM 9322 / NBRC 103400 / NCIMB 10682 / NRRL B-4536 / VPI 7372) (Clostridium thermocellum) protein is UPF0316 protein Cthe_2213.